The sequence spans 162 residues: uncharacterized protein (162 aa).

Positions 78–154 constitute a PUA domain; the sequence is KNLVVVDIGA…KAIKNLHYVG (77 aa).

This is an uncharacterized protein from Methanocaldococcus jannaschii (strain ATCC 43067 / DSM 2661 / JAL-1 / JCM 10045 / NBRC 100440) (Methanococcus jannaschii).